The sequence spans 4518 residues: MAASVAAQEAHGFRKVPTLSLTPGVGMEAAGLVELEEEEEEEEEEEAAARRARSFVQDARVRFVGGRLEQMLGFPEEKWSQHLESEDNRQILGEFLESPGPACLVFSIAAAGQLATSHQIPRDAKHKLVYIAKKITENTGVNDFSQTVVFGELPASSVGYVTAFLDEILVPIISNKNNHKSWSCFISQDMERHVEVMRNKMHIFRGKMLRRTLLPIPTIAGNIDLDQKYSETRLEPNERTILHVLESVVIKWSHQIQEVVEKDSVQPLLSGLHSNPETELDFWTMRRENLSCIYDQLQAPIVLKMVKILKNKQSSYFPTLRDIFLSVKNALREAQDVELYLRPLRRHIQCLQETEFPQTRVLIAPLFHTICLIWSHSKFYNTPARVIVLLQEFCNLFIDQARAYLSPEHLLKGELEDSLEKVQVVINVFKTFKNSFFNYRKGLASYFMGKKEMKPWDFRSHLVFWRFDKFLDRFMKIEDIFVTTLEFEKLERLEFGGTKGAIFNGQIHEMSEELMELCKVFKQSTYDPSDYNNMEFESEYAMFKSKTVDFDRRLGTILCVALFNCNGLEAAFKLLTIFGNFLEKPVVMEIFSPHYSTLVHMFNAELDMCKQLYNEHVKQIEQGTVVLNKNMPFTSGNIKWAKEVLDRLQMFWSNFASLRYLSLESPDDAVVYQKYTEMTTLLDQFENHVYNEWKSNVEEICDFSLNQPLIRFSAVNGLLSVNFDPKLVAVLREVKYLLMLKKSDIPDSALAIFKKRDTLLKYIGNLELLVQGYNKLRQTLLDVEYPLIKDELRAVDEELQAAATSLTWQDDCLRDIERVKTATSELERRVEHTHDNVRAIQQMMRAWAEGTLLPRREHRRETALTWEDKGDLFMKKYKQIQEDGCKIHSLVEENRRLFKANPSLDTWKIYVEFIDDIVVEGFFQTIMHDLDFFLMNTEKQLKPAPFFQAQMILMPPEILFKPSLEREAGDGFYDLVEEMLCSSFRMSAQMKRVAAHLGVANYQNDMDNMLGLAEVRQEIMKRVADVISKVLDFRSTLDMYAYLWVDDRAEFMKHFLLYGHIVSSEETDPLADEDIPEQSPTLEQFKEQIDIYEALYVQMSKFDDFRVFDSWFKVDMKPFKVSLLNIIRKWSWMFQEHLLRFVIDSLNELQEFIKETDAGLQRELSEGDHDGLVDIMGHLLAVRSRQRATDELFEPLKETITLLETYGQKMPEQIYVQLEELPERWETTKKIAATVRHEVSPLQNAEVTLIRKKCISFDEKQAEFRERFRLCAPLGFNAENPYTVLDKAHQELEALEEEVLQMQESTHVFEVALPEYKQMKQCRKEIKLLKGLWDVIIYVRRSIDNWTKTQWRQINVEQMDVELRRFAKEIWSLDKEVRVWDAYSGLEGTVKDMTTSLRAVAELQSPALRDRHWHQLMKAIGVKFSINEAMTLADLLALQLHQVEEDVRSIVDKAVKELGTEKVINEIIQTWATMEFSYEVHYRTGIPLLKSDEQLFETLEHNQVQLQTLLQSKYVEYFIEQVTSWQHKLNTADSAIFTWMEVQRTWSHLESIFVCSEDVRIQLKEDARRFDEVDVEFKELMFRTAKIKNVLQATCRPNLCEKLKDLQYRLSLCEKALAEYLETKRVAFPRFYFISSADLLDILSKGAQPAQVTRHLSKLFDSIADLRFEDDQDVSASRAVGMYSKEKEYVPFSATCECTGHVETWLLQLEQIMKETVRHSITEAIAAYEDKPREVWIFDFPAQVALTSSQIWWTTDVGIAFSRLEEGYETALKDFHKKQISQLNTLIALLLGELLPGDRQKIMTICTIDVHARDVVAKLISQKVRSPQAFAWLSQLRHQWEDTRKHCLVHICDAQFQYFYEYLGNSPRLVITPLTDRCYITLTQSLHLTMSGAPAGPAGTGKTETTKDLGRALGMMVYVFNCSEQMDYKSIGNIYKGLVQTGAWGCFDEFNRISVEVLSVVAVQVKMIHDAIRNRKKRFVFLGEAITLKPSVGIFITMNPGYAGRTELPENLKALFRPCAMVAPDIELICEIMLVAEGFVDARSLAHKFITLYTLCRELLSKQDHYDWGLRAVKSVLVVAGSLKRGDKSRPEEQVLMRALRDFNMPKIVTDDIPVFLGLVSDLFPALDVPRRRAPHFEQMVRQSTVELRLQPEENFILKVVQLEELLAVRHSVFVIGNAGTGKSKILRTLNRTYVNMKQKPVWNDLNPKAVTTDELFGFIHHATREWKDGNVVYSLIGLFSSLLREQANLRQDGPKWIVLDGDIDPMWIESLNTVMDDNKVLTLASNERIALTPSMRLLFEIHHLRTATPATVSRAGILYVNPQDLGWNPYVASWIDRRRHQSEKANLTILFDKYVPACLDKLRTSFKTITSIPESSLVQTVCTLLECLLTPENVPSDSPKDVYEVYFVFACVWAFGGTLSQDQLSGCQAEFSRWWHKEMKAVKFPSQGTIFDYYLDHKTKKFLPWADKIPKFTMDPEVPLQRVLVHTSETTRLRYFIELLLEKGQPLMLVGNAGVGKTVFVGDMLTSLSEAYIVSRVPFNYYTTSAALQRILEKPLEKKAGRNYGPGGNKKMVYFIDDMNMPEVDLYGTVQPHTLIRQHIDYGHWYDRQKVRLKEIHGCQYVACMNPMVGSFTINPRLQRHFTVFAFNFPSMDALNTIYSQILSSHFQHQAFGPSVLRSGPALIQATIAFHQTMTHNFLPTAIKFHYLFNLRDLSNVFQGILFASSECLKGPNDLIQLWLHESYRVYGDRLIDTKDCNLFQKKMLETANKYFEGVDSQLLLQQPLIYCHFANGKEDLCYMPVKDWEVLKTFLTEALDNYNDLNAAMPLVLFEDAMQHVCRISRILQTPQGSALLIGVGGSGKQSLSRLAAYICGLEVFQVTLTQGFGIQELRVDLANLYIRTGAKNLPTAFLLTDAQVLDESFLVLINDLLASGEIPDLFSDEDVDKIISGIRNEVRSLGMVDSKENCWKFFLARARLHLKIILCFSPVGHTLRDRARKFPALVNCTAVDWFHAWPREALVTVSRRFIEETRGIEPLDKDSISLFMAHVHTSVNEMSTRFYQNEGRHNYTTPKSFLEQISLFKNLLKKKQKEVSQKKEHLVNGIQKLKTTASQVGALKARLASQEAELQLRNQDAEALIAKIGLQTEKVSREKAIADAEERKVTAIQTEVSQKQRECEADLLKAEPALVAATAALNTLNRVNLTELKVFPNPPNAVTNVTAAVMVLLAPQGRVPKDRSWKAAKVFMGKVDDFLQALINYDKEHIPENCLKVVNEQYLKDPEFNPNLIRTKSFAAAGLCAWVINIIKFYEVYCDVEPKRHALAQANLELATATEKLEAIRKKLADLDRNLSRLTASFEKAIAEKVRCQEEVNQTNKTIKLANRLVKELEVKKIRWGQSIKSFEAQEKTLCGDILLTAAYVSYVGPFTQQYRQELVDCMWVPFLHWKVSIPMTEGLDVIAMLTDDATIATWNNEGLPNDRMSTENAAILTHCQRWPLMIDPQQQGIKWIKKKYGTDLKVTHLGQKGFLNDIETALAFGDVILIENLEETIDPVLDPLLGRNTIKKGKYIKIGDKECEFNHNFRLILHTKLANPHYKPELQAQTTLLNFTVTQDGLEAQLLAEVVSIERPDLEKLKLVLTKHQNDCKIELKYLEDDLLLRLSAAEGSFLDDTKLVERLETAKATAAEIERKVIEARENERKINEARERYRPVAARASLLYFVINDLRKINPIYQFSLKAFNLLFQRAIEQADKVEDAQGRISALTESITHAVFLSTSQALFEKDKLTFLSQMAFQILLRKKEIDPLELDFLLRFTVEHTYPSPVDFLTPQAWSALKAVALREEFRGLDRDVEGSAKQWRRWAESECPEKEKLPQEWKKKSLIQKLIILRALRPDRMTYALRNFVEEKLGAKYVERTRLDLIKALEESSPACPVFFILSPGVDALKDLEILGKRLGFTSDLGTFHNVSLGQGQEMVAEVALEKASKGGHWVMLQNVHLVAKWLGTLEKLLERFSQGSHRDYRVFMSAESAPTPHEHVIPPGLLENSIKITNEPPTGMLANLHAALYNFDQDTLEACSKEQEFKSILFSLCYFHACVAGRLRFGPQGWSRSYPFSPRDLTICAHVLYNYLEANPHVPWEDLRYLFGEIMYGGHVTDEWDRKLCRVYLEEFMNPSLIDDELMLAPGFAAPPNLDYSGYHQYIEEMLPPESPALYGLHPNAEIEFLTVTSNTLFRTLLEIQPKNALSNEELGQSTEDKVKNVLEDILEKLPEEFNMAEIMQKNPNRSPYVLVCFQECERMNILLQEIRVSLQRLDLGLKGELTLSPDMEAQQSALSYDAVPDTWSKVAYPSTYGLAQWFNDLLLRCRELDTWTQDLALPAVVWLSGFFNPQSFLTAIMQTMARKNEWPLDKMCLTIDVTKKMKEDYGHAPREGAYLHGLLLEGARWDSQSGTIVDAHLKELRSAMPVIFAKAIPMDRQETKHTYECPVYRTKMRGPNYVWTFRLKSKEKTAKWVLAGVALLLEA.

The stem stretch occupies residues 1 to 1857 (MAASVAAQEA…LVHICDAQFQ (1857 aa)). AAA regions lie at residues 1858 to 2079 (YFYE…VLVV), 2139 to 2368 (QMVR…TSFK), 2474 to 2721 (TMDP…VFQG), and 2819 to 3068 (NYND…EGRH). ATP is bound by residues 1896 to 1903 (GPAGTGKT), 2177 to 2184 (GNAGTGKS), 2512 to 2519 (GNAGVGKT), and 2857 to 2864 (GVGGSGKQ). Residues 3074 to 3405 (KSFLEQISLF…GQSIKSFEAQ (332 aa)) are stalk. Residues 3322–3391 (LAQANLELAT…NRLVKELEVK (70 aa)) adopt a coiled-coil conformation. AAA stretches follow at residues 3461-3688 (LTDD…EIER) and 3898-4124 (LRNF…VLYN).

The protein belongs to the dynein heavy chain family. Consists of at least two heavy chains and a number of intermediate and light chains. Interacts with CFAP45.

The protein localises to the cytoplasm. Its subcellular location is the cytoskeleton. The protein resides in the cilium axoneme. Functionally, force generating protein of respiratory cilia. Produces force towards the minus ends of microtubules. Dynein has ATPase activity; the force-producing power stroke is thought to occur on release of ADP. This Sus scrofa (Pig) protein is Dynein axonemal heavy chain 11 (DNAH11).